The following is a 407-amino-acid chain: Protease ElaD (407 aa).

Histidine 231 is an active-site residue. Cysteine 317 (nucleophile) is an active-site residue.

This sequence belongs to the peptidase C79 family.

Protease that can act as an efficient and specific deubiquitinating enzyme in vitro. Does not possess desumoylating and deneddylating activities. The physiological substrate is unknown. This is Protease ElaD (elaD) from Escherichia coli O157:H7.